Here is a 227-residue protein sequence, read N- to C-terminus: Guanylate kinase (227 aa).

A Guanylate kinase-like domain is found at 21–199 (GNLFMVVAPS…ALAELECIVA (179 aa)). 28-35 (APSGAGKS) provides a ligand contact to ATP.

The protein belongs to the guanylate kinase family.

It is found in the cytoplasm. It catalyses the reaction GMP + ATP = GDP + ADP. In terms of biological role, essential for recycling GMP and indirectly, cGMP. The chain is Guanylate kinase from Burkholderia mallei (strain ATCC 23344).